We begin with the raw amino-acid sequence, 539 residues long: Membrane protein insertase YidC (539 aa).

Residues 6–26 traverse the membrane as a helical segment; sequence NILLIALALVSFLLFQQWNVA. Positions 35–44 are enriched in polar residues; sequence EQAQSGSTLP. The tract at residues 35-55 is disordered; sequence EQAQSGSTLPAPSYADDLDPA. 4 consecutive transmembrane segments (helical) span residues 341-361, 416-436, 454-474, and 495-515; these read SFIQGIVVNWGLAIICLTFIV, LGGCLPILLQMPIFISLYWAL, LSAQDPYYILPLLMGASMFLI, and PVMFTFFFLFFPSGLVLYWLV.

Belongs to the OXA1/ALB3/YidC family. Type 1 subfamily. As to quaternary structure, interacts with the Sec translocase complex via SecD. Specifically interacts with transmembrane segments of nascent integral membrane proteins during membrane integration.

The protein localises to the cell inner membrane. Required for the insertion and/or proper folding and/or complex formation of integral membrane proteins into the membrane. Involved in integration of membrane proteins that insert both dependently and independently of the Sec translocase complex, as well as at least some lipoproteins. Aids folding of multispanning membrane proteins. The chain is Membrane protein insertase YidC from Vibrio atlanticus (strain LGP32) (Vibrio splendidus (strain Mel32)).